Reading from the N-terminus, the 160-residue chain is Protein max (160 aa).

The segment covering 1–13 (MSDNDDIEVESDE) has biased composition (acidic residues). The segment at 1–40 (MSDNDDIEVESDEEQPRFQSAADKRAHHNALERKRRDHIK) is disordered. Ser2 bears the N-acetylserine mark. A phosphoserine mark is found at Ser2 and Ser11. A bHLH domain is found at 23–74 (DKRAHHNALERKRRDHIKDSFHSLRDSVPSLQGEKASRAQILDKATEYIQYM). A compositionally biased stretch (basic and acidic residues) spans 29–40 (NALERKRRDHIK). N6-acetyllysine is present on Lys66. The segment at 81–102 (HQQDIDDLKRQNALLEQQVRAL) is leucine-zipper. Residues 103 to 160 (EKARSSAQLQTNYPSSDNSLYTNAKGSTISAFDGGSDSSSESEPEEPQSRKKLRMEAS) form a disordered region. Ser107 is modified (phosphoserine). A compositionally biased stretch (polar residues) spans 107–132 (SSAQLQTNYPSSDNSLYTNAKGSTIS). A Nuclear localization signal motif is present at residues 152 to 156 (RKKLR). Residues Lys153 and Lys154 each carry the N6-acetyllysine modification.

This sequence belongs to the MAX family. Efficient DNA binding requires dimerization with another bHLH protein. Binds DNA as a heterodimer with MYC or MAD. Part of the E2F6.com-1 complex in G0 phase composed of E2F6, MGA, MAX, TFDP1, CBX3, BAT8, EUHMTASE1, RING1, RNF2, MBLR, L3MBTL2 and YAF2. Component of some MLL1/MLL complex, at least composed of the core components KMT2A/MLL1, ASH2L, HCFC1/HCF1, WDR5 and RBBP5, as well as the facultative components BACC1, CHD8, E2F6, HSP70, INO80C, KANSL1, LAS1L, MAX, MCRS1, MGA, MYST1/MOF, PELP1, PHF20, PRP31, RING2, RUVB1/TIP49A, RUVB2/TIP49B, SENP3, TAF1, TAF4, TAF6, TAF7, TAF9 and TEX10. Interacts with SPAG9. The heterodimer MYC:MAX interacts with ABI1; the interaction may enhance MYC:MAX transcriptional activity. Reversible lysine acetylation might regulate the nuclear-cytoplasmic shuttling of specific Max complexes. As to expression, high levels found in the brain, heart and lung while lower levels are seen in the liver, kidney and skeletal muscle.

The protein resides in the nucleus. It is found in the cell projection. Its subcellular location is the dendrite. Its function is as follows. Transcription regulator. Forms a sequence-specific DNA-binding protein complex with MYC or MAD which recognizes the core sequence 5'-CAC[GA]TG-3'. The MYC:MAX complex is a transcriptional activator, whereas the MAD:MAX complex is a repressor. May repress transcription via the recruitment of a chromatin remodeling complex containing H3 'Lys-9' histone methyltransferase activity. Represses MYC transcriptional activity from E-box elements. In Homo sapiens (Human), this protein is Protein max.